The chain runs to 398 residues: CCA-adding enzyme (398 aa).

Residues glycine 32 and arginine 35 each contribute to the ATP site. Glycine 32 and arginine 35 together coordinate CTP. Aspartate 45 and aspartate 47 together coordinate Mg(2+). The ATP site is built by arginine 119, aspartate 162, arginine 165, arginine 168, and arginine 171. Residues arginine 119, aspartate 162, arginine 165, arginine 168, and arginine 171 each coordinate CTP.

The protein belongs to the tRNA nucleotidyltransferase/poly(A) polymerase family. Bacterial CCA-adding enzyme type 3 subfamily. As to quaternary structure, homodimer. The cofactor is Mg(2+).

The enzyme catalyses a tRNA precursor + 2 CTP + ATP = a tRNA with a 3' CCA end + 3 diphosphate. The catalysed reaction is a tRNA with a 3' CCA end + 2 CTP + ATP = a tRNA with a 3' CCACCA end + 3 diphosphate. Its function is as follows. Catalyzes the addition and repair of the essential 3'-terminal CCA sequence in tRNAs without using a nucleic acid template. Adds these three nucleotides in the order of C, C, and A to the tRNA nucleotide-73, using CTP and ATP as substrates and producing inorganic pyrophosphate. tRNA 3'-terminal CCA addition is required both for tRNA processing and repair. Also involved in tRNA surveillance by mediating tandem CCA addition to generate a CCACCA at the 3' terminus of unstable tRNAs. While stable tRNAs receive only 3'-terminal CCA, unstable tRNAs are marked with CCACCA and rapidly degraded. The sequence is that of CCA-adding enzyme from Lactococcus lactis subsp. lactis (strain IL1403) (Streptococcus lactis).